Here is a 394-residue protein sequence, read N- to C-terminus: NAD(P)H-quinone oxidoreductase subunit H (394 aa).

This sequence belongs to the complex I 49 kDa subunit family. NDH-1 can be composed of about 15 different subunits; different subcomplexes with different compositions have been identified which probably have different functions.

The protein resides in the cellular thylakoid membrane. It catalyses the reaction a plastoquinone + NADH + (n+1) H(+)(in) = a plastoquinol + NAD(+) + n H(+)(out). The enzyme catalyses a plastoquinone + NADPH + (n+1) H(+)(in) = a plastoquinol + NADP(+) + n H(+)(out). NDH-1 shuttles electrons from an unknown electron donor, via FMN and iron-sulfur (Fe-S) centers, to quinones in the respiratory and/or the photosynthetic chain. The immediate electron acceptor for the enzyme in this species is believed to be plastoquinone. Couples the redox reaction to proton translocation, and thus conserves the redox energy in a proton gradient. Cyanobacterial NDH-1 also plays a role in inorganic carbon-concentration. The protein is NAD(P)H-quinone oxidoreductase subunit H of Picosynechococcus sp. (strain ATCC 27264 / PCC 7002 / PR-6) (Agmenellum quadruplicatum).